The chain runs to 275 residues: MISPSTKLYGLIGYPLGHSISFYIHNAAFRALSIDALYINIPIEPESFSKAILGIKYLPIYGLNVTIPHKERIIDFLDEISVISKLIGAVNTVYLEENKWKGENTDFGGFLETLKELKLDKDLPCLILGAGGAARAVVYAVIEYGFKEIYLTNRTYGRAERIAEEVKKNKNIEIKIIPWQERHKVDEKLILINTTSIGLDGKSTPWNGNFKSIAFVYDIIYNPKETPLLSLAKENNVPFKNGLDMLIYQACLSWNKWFGFIGPFEIMKREAEKLL.

Shikimate-binding positions include 19-21 and Thr66; that span reads SIS. Catalysis depends on Lys70, which acts as the Proton acceptor. The shikimate site is built by Asn91 and Asp106. NADP(+) contacts are provided by residues 129 to 133, 153 to 158, and Ile219; these read GAGGA and NRTYGR. Position 221 (Tyr221) interacts with shikimate. Gly242 is an NADP(+) binding site.

The protein belongs to the shikimate dehydrogenase family. Homodimer.

It carries out the reaction shikimate + NADP(+) = 3-dehydroshikimate + NADPH + H(+). Its pathway is metabolic intermediate biosynthesis; chorismate biosynthesis; chorismate from D-erythrose 4-phosphate and phosphoenolpyruvate: step 4/7. In terms of biological role, involved in the biosynthesis of the chorismate, which leads to the biosynthesis of aromatic amino acids. Catalyzes the reversible NADPH linked reduction of 3-dehydroshikimate (DHSA) to yield shikimate (SA). This is Shikimate dehydrogenase (NADP(+)) from Dictyoglomus thermophilum (strain ATCC 35947 / DSM 3960 / H-6-12).